A 700-amino-acid polypeptide reads, in one-letter code: Elongation factor G (700 aa).

A tr-type G domain is found at 8 to 290; sequence ERYRNIGISA…AVVEYLPSPV (283 aa). Residues 17-24, 88-92, and 142-145 each bind GTP; these read AHIDAGKT, DTPGH, and NKMD.

Belongs to the TRAFAC class translation factor GTPase superfamily. Classic translation factor GTPase family. EF-G/EF-2 subfamily.

Its subcellular location is the cytoplasm. Its function is as follows. Catalyzes the GTP-dependent ribosomal translocation step during translation elongation. During this step, the ribosome changes from the pre-translocational (PRE) to the post-translocational (POST) state as the newly formed A-site-bound peptidyl-tRNA and P-site-bound deacylated tRNA move to the P and E sites, respectively. Catalyzes the coordinated movement of the two tRNA molecules, the mRNA and conformational changes in the ribosome. This chain is Elongation factor G, found in Mannheimia succiniciproducens (strain KCTC 0769BP / MBEL55E).